We begin with the raw amino-acid sequence, 239 residues long: tRNA (guanine-N(1)-)-methyltransferase (239 aa).

S-adenosyl-L-methionine contacts are provided by residues Gly-108 and 127-132 (LGDYVL).

The protein belongs to the RNA methyltransferase TrmD family. Homodimer.

The protein localises to the cytoplasm. It catalyses the reaction guanosine(37) in tRNA + S-adenosyl-L-methionine = N(1)-methylguanosine(37) in tRNA + S-adenosyl-L-homocysteine + H(+). Its function is as follows. Specifically methylates guanosine-37 in various tRNAs. In Streptococcus pneumoniae serotype 19F (strain G54), this protein is tRNA (guanine-N(1)-)-methyltransferase.